A 334-amino-acid polypeptide reads, in one-letter code: Glycerol-3-phosphate dehydrogenase [NAD(P)+] (334 aa).

NADPH is bound by residues serine 14, tyrosine 15, histidine 35, and lysine 109. Sn-glycerol 3-phosphate-binding residues include lysine 109, glycine 138, and threonine 140. Residue alanine 142 coordinates NADPH. Sn-glycerol 3-phosphate-binding residues include lysine 194, aspartate 247, serine 257, arginine 258, and asparagine 259. Lysine 194 serves as the catalytic Proton acceptor. Position 258 (arginine 258) interacts with NADPH. Positions 282 and 284 each coordinate NADPH.

It belongs to the NAD-dependent glycerol-3-phosphate dehydrogenase family.

The protein resides in the cytoplasm. The catalysed reaction is sn-glycerol 3-phosphate + NAD(+) = dihydroxyacetone phosphate + NADH + H(+). The enzyme catalyses sn-glycerol 3-phosphate + NADP(+) = dihydroxyacetone phosphate + NADPH + H(+). It functions in the pathway membrane lipid metabolism; glycerophospholipid metabolism. Catalyzes the reduction of the glycolytic intermediate dihydroxyacetone phosphate (DHAP) to sn-glycerol 3-phosphate (G3P), the key precursor for phospholipid synthesis. The chain is Glycerol-3-phosphate dehydrogenase [NAD(P)+] from Tolumonas auensis (strain DSM 9187 / NBRC 110442 / TA 4).